Here is a 140-residue protein sequence, read N- to C-terminus: Methylglyoxal synthase (140 aa).

Residues 1 to 140 (MRSKPRIALI…DQAAADDAAP (140 aa)) form the MGS-like domain. Residues His-12, Lys-16, 38 to 41 (TGTT), and 58 to 59 (SG) contribute to the substrate site. The Proton donor/acceptor role is filled by Asp-64. Residue His-91 participates in substrate binding.

Belongs to the methylglyoxal synthase family.

The enzyme catalyses dihydroxyacetone phosphate = methylglyoxal + phosphate. Catalyzes the formation of methylglyoxal from dihydroxyacetone phosphate. In Cupriavidus metallidurans (strain ATCC 43123 / DSM 2839 / NBRC 102507 / CH34) (Ralstonia metallidurans), this protein is Methylglyoxal synthase.